A 472-amino-acid polypeptide reads, in one-letter code: Ribosomal protein uS12 methylthiotransferase RimO (472 aa).

An MTTase N-terminal domain is found at 33-143 (NRIGFVSLGC…VLKHVHKYVP (111 aa)). Residues cysteine 42, cysteine 78, cysteine 107, cysteine 175, cysteine 179, and cysteine 182 each contribute to the [4Fe-4S] cluster site. The 238-residue stretch at 161-398 (LTPKHYAYLK…MEVQAEISAE (238 aa)) folds into the Radical SAM core domain. One can recognise a TRAM domain in the interval 401-467 (ARFVGRTLDI…EHDLWAEVVD (67 aa)).

Belongs to the methylthiotransferase family. RimO subfamily. Requires [4Fe-4S] cluster as cofactor.

Its subcellular location is the cytoplasm. It carries out the reaction L-aspartate(89)-[ribosomal protein uS12]-hydrogen + (sulfur carrier)-SH + AH2 + 2 S-adenosyl-L-methionine = 3-methylsulfanyl-L-aspartate(89)-[ribosomal protein uS12]-hydrogen + (sulfur carrier)-H + 5'-deoxyadenosine + L-methionine + A + S-adenosyl-L-homocysteine + 2 H(+). Catalyzes the methylthiolation of an aspartic acid residue of ribosomal protein uS12. This is Ribosomal protein uS12 methylthiotransferase RimO from Shewanella baltica (strain OS195).